Here is a 294-residue protein sequence, read N- to C-terminus: Putative glucose-6-phosphate 1-epimerase (294 aa).

Positions 74 and 99 each coordinate substrate. The active site involves His-164. Residue Asp-208 participates in substrate binding. Residue Glu-267 is part of the active site.

It belongs to the glucose-6-phosphate 1-epimerase family. In terms of assembly, monomer in solution.

It carries out the reaction alpha-D-glucose 6-phosphate = beta-D-glucose 6-phosphate. This Escherichia coli (strain K12) protein is Putative glucose-6-phosphate 1-epimerase (yeaD).